Reading from the N-terminus, the 271-residue chain is L-aspartate dehydrogenase (271 aa).

NAD(+)-binding residues include Ala124 and Asn192. His222 is a catalytic residue.

Belongs to the L-aspartate dehydrogenase family.

The catalysed reaction is L-aspartate + NADP(+) + H2O = oxaloacetate + NH4(+) + NADPH + H(+). It catalyses the reaction L-aspartate + NAD(+) + H2O = oxaloacetate + NH4(+) + NADH + H(+). It functions in the pathway cofactor biosynthesis; NAD(+) biosynthesis; iminoaspartate from L-aspartate (dehydrogenase route): step 1/1. Its function is as follows. Specifically catalyzes the NAD or NADP-dependent dehydrogenation of L-aspartate to iminoaspartate. The chain is L-aspartate dehydrogenase from Methanosarcina mazei (strain ATCC BAA-159 / DSM 3647 / Goe1 / Go1 / JCM 11833 / OCM 88) (Methanosarcina frisia).